Reading from the N-terminus, the 326-residue chain is tRNA(Ile)-lysidine synthase (326 aa).

25 to 30 (SGGQDS) contributes to the ATP binding site.

This sequence belongs to the tRNA(Ile)-lysidine synthase family.

It localises to the cytoplasm. The enzyme catalyses cytidine(34) in tRNA(Ile2) + L-lysine + ATP = lysidine(34) in tRNA(Ile2) + AMP + diphosphate + H(+). Functionally, ligates lysine onto the cytidine present at position 34 of the AUA codon-specific tRNA(Ile) that contains the anticodon CAU, in an ATP-dependent manner. Cytidine is converted to lysidine, thus changing the amino acid specificity of the tRNA from methionine to isoleucine. In Prochlorococcus marinus (strain NATL1A), this protein is tRNA(Ile)-lysidine synthase.